The following is a 20-amino-acid chain: MKCNECNRVQLKEGSVSLTL.

The chain is Tetracycline resistance leader peptide (tetL) from Bacillus cereus.